Consider the following 507-residue polypeptide: Cytochrome P450 4X1 (507 aa).

The helical transmembrane segment at 14-34 (LHLALVFCLALVLMQAMKLYL) threads the bilayer. Cys-452 lines the heme pocket.

This sequence belongs to the cytochrome P450 family. Requires heme as cofactor. Expressed in brain and aorta. In the brain, expressed in the Purkinje cells of the cerebellum, pyramidal neurons in the dentate gyrus of the hippocampus, cortical forebrain neurons and those of brain stem nuclei (at protein level). In addition to neurons, also expressed in cerebral vascular endothelial cells (at protein level). Also expressed in epithelial cells of the choroid plexus (at protein level). Hardly detectable in heart, lung, kidney and spleen.

The protein localises to the endoplasmic reticulum membrane. Its subcellular location is the microsome membrane. It catalyses the reaction N-(5Z,8Z,11Z,14Z-eicosatetraenoyl)-ethanolamine + reduced [NADPH--hemoprotein reductase] + O2 = N-(14,15-epoxy-5Z,8Z,11Z-eicosatrienoyl)-ethanolamine + oxidized [NADPH--hemoprotein reductase] + H2O + H(+). A cytochrome P450 monooxygenase that selectively catalyzes the epoxidation of the last double bond of the arachidonoyl moiety of anandamide, potentially modulating endocannabinoid signaling. Has no hydroxylase activity toward various fatty acids, steroids and prostaglandins. Mechanistically, uses molecular oxygen inserting one oxygen atom into a substrate, and reducing the second into a water molecule, with two electrons provided by NADPH via cytochrome P450 reductase (CPR; NADPH-ferrihemoprotein reductase). This is Cytochrome P450 4X1 from Mus musculus (Mouse).